A 177-amino-acid chain; its full sequence is Small ribosomal subunit protein uS13 (177 aa).

Positions 132-145 (GVRHKRGQKVRGQR) are enriched in basic residues. Positions 132-177 (GVRHKRGQKVRGQRTKSTGRTEGTIGVNVEAIKEEQAEDAAAEDDE) are disordered. Residues 167 to 177 (QAEDAAAEDDE) show a composition bias toward acidic residues.

The protein belongs to the universal ribosomal protein uS13 family. In terms of assembly, part of the 30S ribosomal subunit. Forms a loose heterodimer with protein S19. Forms two bridges to the 50S subunit in the 70S ribosome.

In terms of biological role, located at the top of the head of the 30S subunit, it contacts several helices of the 16S rRNA. In the 70S ribosome it contacts the 23S rRNA (bridge B1a) and protein L5 of the 50S subunit (bridge B1b), connecting the 2 subunits; these bridges are implicated in subunit movement. This Haloarcula marismortui (strain ATCC 43049 / DSM 3752 / JCM 8966 / VKM B-1809) (Halobacterium marismortui) protein is Small ribosomal subunit protein uS13.